A 478-amino-acid chain; its full sequence is Odorant receptor coreceptor (478 aa).

The Cytoplasmic portion of the chain corresponds to 1 to 41 (MQVQPTKYVGLVADLMPNIRLMQASGHFLFRYVTGPILIRK). Residues 42 to 62 (VYSWWTLAMVLIQFFAILGNL) form a helical membrane-spanning segment. At 63-73 (ATNADDVNELT) the chain is on the extracellular side. A helical transmembrane segment spans residues 74–94 (ANTITTLFFTHSVTKFIYFAV). Topologically, residues 95–133 (NSENFYRTLAIWNQTNTHPLFAESDARYHSIALAKMRKL) are cytoplasmic. A helical transmembrane segment spans residues 134-154 (LVLVMATTVLSVVAWVTITFF). Residues 155–188 (GESVKTVLDKATNETYTVDIPRLPIKSWYPWNAM) lie on the Extracellular side of the membrane. The N-linked (GlcNAc...) asparagine glycan is linked to Asn167. A helical transmembrane segment spans residues 189–209 (SGPAYIFSFIYQIYFLLFSMV). Residues 210–338 (QSNLADVMFC…AIKYWVERHK (129 aa)) are Cytoplasmic-facing. A helical transmembrane segment spans residues 339 to 361 (HVVRLVSAIGDTYGPALLLHMLT). Residues 362 to 382 (STIKLTLLAYQATKIDGVNVY) lie on the Extracellular side of the membrane. A helical membrane pass occupies residues 383–403 (GLTVIGYLCYALAQVFLFCIF). The Cytoplasmic segment spans residues 404–454 (GNRLIEESSSVMEAAYSCHWYDGSEEAKTFVQIVCQQCQKAMTISGAKFFT). The chain crosses the membrane as a helical span at residues 455-475 (VSLDLFASVLGAVVTYFMVLV). Topologically, residues 476–478 (QLK) are extracellular.

It belongs to the insect chemoreceptor superfamily. Heteromeric odorant receptor channel (TC 1.A.69) family. Orco subfamily. As to quaternary structure, heterodimer with conventional odorant receptors (ORs). Complexes exist early in the endomembrane system in olfactory sensory neurons (OSNs), coupling these complexes to the conserved ciliary trafficking pathway. Expressed in olfactory and gustatory organs of both adult and immature stages. Highest expression is seen in adult antennae and the maxillary palps. Lower expression also seen in proboscis and legs. Within the antenna, expression originates in cell bodies and projects into the lumen of an individual sensillum, presumably along the dendritic extension of the neuron. Within the maxillary palps, expression is seen in a small number of cell bodies and in projections into the sensillar cone. Within the probiscus, expression is seen in a single type of sensillum on the outer surface of the labellar lobes.

It localises to the cell membrane. Functionally, odorant coreceptor which complexes with conventional odorant receptors (ORs) to form odorant-sensing units, providing sensitive and prolonged odorant signaling and calcium permeability. Orco is a universal and integral part of the functional odorant receptor, involved in the dendritic localization of other olfactory receptors. Can form functional ion channels in the absence of an odor-binding OR. Plays a key role in preferred attraction of females for humans over non-human hosts for blood feeding. Human attraction plays a crucial role in the transmission of Plasmodium protozoans by the mosquito leading to infection diseases like malaria. Also required for the response to N,N-Diethyl-meta-toluamide (DEET), the most widely used insect repellent worldwide. The protein is Odorant receptor coreceptor (Orco) of Anopheles gambiae (African malaria mosquito).